Consider the following 306-residue polypeptide: Mitochondrial brown fat uncoupling protein 1 (306 aa).

Residues 1–10 (MVGTTTTDVP) are Mitochondrial intermembrane-facing. The chain crosses the membrane as a helical span at residues 11 to 32 (PTMGVKIFSAGVAACLADVITF). 3 Solcar repeats span residues 11 to 102 (PTMG…VQEF), 110 to 200 (PSLG…MKGA), and 209 to 294 (DDVP…LKGE). Residues 33-73 (PLDTAKVRQQIQGEFPITSGIRYKGVLGTITTLAKTEGPLK) lie on the Mitochondrial matrix side of the membrane. Residue lysine 56 coordinates fatty acid 16:0. Residues 74-96 (LYSGLPAGLQRQISFASLRIGLY) traverse the membrane as a helical segment. Topologically, residues 97–115 (DTVQEFFTSGEETPSLGSK) are mitochondrial intermembrane. A helical transmembrane segment spans residues 116 to 132 (ISAGLTTGGVAVFIGQP). The Mitochondrial matrix segment spans residues 133 to 177 (TEVVKVRLQAQSHLHGLKPRYTGTYNAYRIIATTESLTSLWKGTT). The helical transmembrane segment at 178–194 (PNLLRNVIINCTELVTY) threads the bilayer. Over 195 to 211 (DLMKGALVRNEILADDV) the chain is Mitochondrial intermembrane. A helical membrane pass occupies residues 212–231 (PCHFVSALIAGFCTTLLSSP). At 232–265 (VDVVKTRFINSPPGQYASVPNCAMTMFTKEGPTA) the chain is on the mitochondrial matrix side. Cysteine 253 carries the cysteine sulfenic acid (-SOH) modification. Residues 266–288 (FFKGFVPSFLRLGSWNVIMFVCF) traverse the membrane as a helical segment. Lysine 268 serves as a coordination point for fatty acid 16:0. Topologically, residues 289–306 (EKLKGELMRSRQTVDCAT) are mitochondrial intermembrane.

The protein belongs to the mitochondrial carrier (TC 2.A.29) family. As to quaternary structure, most probably functions as a monomer. Binds one purine nucleotide per monomer. However, has also been suggested to function as a homodimer or a homotetramer. Tightly associates with cardiolipin in the mitochondrion inner membrane; may stabilize and regulate its activity. May undergo sulfenylation upon cold exposure. May increase the sensitivity of UCP1 thermogenic function to the activation by noradrenaline probably through structural effects. Post-translationally, may undergo ubiquitin-mediated proteasomal degradation. As to expression, brown adipose tissue.

The protein resides in the mitochondrion inner membrane. It catalyses the reaction H(+)(in) = H(+)(out). Its activity is regulated as follows. Has no constitutive proton transporter activity and has to be activated by long-chain fatty acids/LCFAs. Inhibited by purine nucleotides. Both purine nucleotides and LCFAs bind the cytosolic side of the transporter and directly compete to activate or inhibit it. Activated by noradrenaline and reactive oxygen species. Despite lacking canonical translational encoding for selenocysteine, a small pool of the protein has been observed to selectively incorporate selenocysteine at 'Cys-253'. Selenocysteine-modified protein is highly sensitive to redox modification and may constitute a pool of protein highly sensitive to activation by elevated levels of reactive oxygen species (ROS). In terms of biological role, mitochondrial protein responsible for thermogenic respiration, a specialized capacity of brown adipose tissue and beige fat that participates in non-shivering adaptive thermogenesis to temperature and diet variations and more generally to the regulation of energy balance. Functions as a long-chain fatty acid/LCFA and proton symporter, simultaneously transporting one LCFA and one proton through the inner mitochondrial membrane. However, LCFAs remaining associated with the transporter via their hydrophobic tails, it results in an apparent transport of protons activated by LCFAs. Thereby, dissipates the mitochondrial proton gradient and converts the energy of substrate oxydation into heat instead of ATP. Regulates the production of reactive oxygen species/ROS by mitochondria. The chain is Mitochondrial brown fat uncoupling protein 1 from Oryctolagus cuniculus (Rabbit).